Here is a 206-residue protein sequence, read N- to C-terminus: LexA repressor (206 aa).

The H-T-H motif DNA-binding region spans 28 to 48; the sequence is RAEIAKRLGFKSANAAEEHLK. Residues Ser123 and Lys160 each act as for autocatalytic cleavage activity in the active site.

This sequence belongs to the peptidase S24 family. As to quaternary structure, homodimer.

The catalysed reaction is Hydrolysis of Ala-|-Gly bond in repressor LexA.. Its function is as follows. Represses a number of genes involved in the response to DNA damage (SOS response), including recA and lexA. In the presence of single-stranded DNA, RecA interacts with LexA causing an autocatalytic cleavage which disrupts the DNA-binding part of LexA, leading to derepression of the SOS regulon and eventually DNA repair. The sequence is that of LexA repressor from Shewanella sediminis (strain HAW-EB3).